A 775-amino-acid chain; its full sequence is Putative late blight resistance protein homolog R1A-3 (775 aa).

Residues 16-39 (PRMNEEIVGFEDVIENLRKKLLSE) are a coiled coil. In terms of domain architecture, NB-ARC spans 17-237 (RMNEEIVGFE…LSEMEKEVEC (221 aa)). Residue 50–57 (GMPGLGKT) participates in ATP binding. The HMA domain occupies 711–775 (IKKMILQFDI…VGKLIDSGML (65 aa)).

This sequence belongs to the disease resistance NB-LRR family.

Its subcellular location is the cytoplasm. The protein resides in the membrane. In terms of biological role, confers resistance to late blight (Phytophthora infestans) races carrying the avirulence gene Avr1. Resistance proteins guard the plant against pathogens that contain an appropriate avirulence protein via an indirect interaction with this avirulence protein. That triggers a defense system including the hypersensitive response, which restricts the pathogen growth. The chain is Putative late blight resistance protein homolog R1A-3 (R1A-3) from Solanum demissum (Wild potato).